A 544-amino-acid chain; its full sequence is Probable protein kinase UbiB (544 aa).

One can recognise a Protein kinase domain in the interval 123–501 (DFDIKPLASA…KRQQGTGKFL (379 aa)). ATP contacts are provided by residues 129–137 (LASASIAQV) and K152. Residue D287 is the Proton acceptor of the active site. The next 2 membrane-spanning stretches (helical) occupy residues 496 to 516 (GTGK…AIWI) and 519 to 539 (QLEP…LLSW).

It belongs to the ABC1 family. UbiB subfamily.

The protein localises to the cell inner membrane. Its pathway is cofactor biosynthesis; ubiquinone biosynthesis [regulation]. In terms of biological role, is probably a protein kinase regulator of UbiI activity which is involved in aerobic coenzyme Q (ubiquinone) biosynthesis. In Vibrio cholerae serotype O1 (strain ATCC 39315 / El Tor Inaba N16961), this protein is Probable protein kinase UbiB.